A 385-amino-acid polypeptide reads, in one-letter code: 28S rRNA (uridine-N(3))-methyltransferase (385 aa).

Disordered stretches follow at residues 1–35 (MAER…KKKW) and 47–72 (QRAQ…NQGR). Composition is skewed to basic and acidic residues over residues 15–35 (HGQR…KKKW) and 47–58 (QRAQEEEAKRQE). S-adenosyl-L-methionine contacts are provided by Arg293, Gly313, Asn342, and Thr343.

This sequence belongs to the class IV-like SAM-binding methyltransferase superfamily. Interacts with INCA1.

Its subcellular location is the cytoplasm. It is found in the cytoskeleton. The protein localises to the spindle. The protein resides in the chromosome. It localises to the centromere. Its subcellular location is the kinetochore. It is found in the microtubule organizing center. The protein localises to the centrosome. The enzyme catalyses uridine in 28S rRNA + S-adenosyl-L-methionine = N(3)-methyluridine in 28S rRNA + S-adenosyl-L-homocysteine + H(+). In terms of biological role, S-adenosyl-L-methionine-dependent methyltransferase that specifically methylates the N3 position of a uridine in 28S rRNA. Required for association of the centrosomes with the poles of the bipolar mitotic spindle during metaphase. Also involved in chromosome alignment. May promote centrosome maturation probably by recruiting A-kinase anchor protein AKAP9 to centrosomes in early mitosis. Binds specifically to miRNA MIR145 hairpin, regulates MIR145 expression at a postranscriptional level. The chain is 28S rRNA (uridine-N(3))-methyltransferase from Mus musculus (Mouse).